A 173-amino-acid polypeptide reads, in one-letter code: Ribonuclease H (173 aa).

The segment at Met-1–Pro-20 is disordered. An RNase H type-1 domain is found at Pro-20–Gly-162. Mg(2+)-binding residues include Asp-29, Glu-67, Asp-89, and Asp-154.

This sequence belongs to the RNase H family. Monomer. Mg(2+) is required as a cofactor.

It is found in the cytoplasm. It catalyses the reaction Endonucleolytic cleavage to 5'-phosphomonoester.. Its function is as follows. Endonuclease that specifically degrades the RNA of RNA-DNA hybrids. The polypeptide is Ribonuclease H (Syntrophus aciditrophicus (strain SB)).